We begin with the raw amino-acid sequence, 669 residues long: Alpha-1,6-mannosylglycoprotein 6-beta-N-acetylglucosaminyltransferase (669 aa).

Over 1-7 the chain is Cytoplasmic; that stretch reads MRRRHRC. The chain crosses the membrane as a helical; Signal-anchor for type II membrane protein span at residues 8–28; it reads VALLFIFSAFITPLGFFYYTI. Topologically, residues 29–669 are lumenal; the sequence is SNESKRYSEE…EQHAICKKCL (641 aa). Residues Asn30, Asn412, Asn437, and Asn626 are each glycosylated (N-linked (GlcNAc...) asparagine).

Belongs to the glycosyltransferase 18 family. In terms of tissue distribution, expressed in a complex subset of neurons in larvae and in the spermathecal and pharyngeal-intestinal valves and certain vulval cells of adults.

The protein localises to the golgi apparatus membrane. It catalyses the reaction N(4)-{beta-D-GlcNAc-(1-&gt;2)-[beta-D-GlcNAc-(1-&gt;4)]-alpha-D-Man-(1-&gt;3)-[beta-D-GlcNAc-(1-&gt;2)-alpha-D-Man-(1-&gt;6)]-beta-D-Man-(1-&gt;4)-beta-D-GlcNAc-(1-&gt;4)-beta-D-GlcNAc}-L-asparaginyl-[protein] + UDP-N-acetyl-alpha-D-glucosamine = N(4)-{beta-D-GlcNAc-(1-&gt;2)-[beta-D-GlcNAc-(1-&gt;4)]-alpha-D-Man-(1-&gt;3)-[beta-D-GlcNAc-(1-&gt;2)-[beta-D-GlcNAc-(1-&gt;6)]-alpha-D-Man-(1-&gt;6)]-beta-D-Man-(1-&gt;4)-beta-D-GlcNAc-(1-&gt;4)-beta-D-GlcNAc}-L-asparaginyl-[protein] + UDP + H(+). It participates in protein modification; protein glycosylation. Its function is as follows. Catalyzes the addition of N-acetylglucosamine (GlcNAc) in beta 1-6 linkage to the alpha-linked mannose of biantennary N-linked oligosaccharides. This chain is Alpha-1,6-mannosylglycoprotein 6-beta-N-acetylglucosaminyltransferase (gly-2), found in Caenorhabditis elegans.